A 379-amino-acid chain; its full sequence is Cysteine-rich receptor-like protein kinase 44 (379 aa).

One can recognise a Protein kinase domain in the interval F56–T336. Residues L62–V70 and K84 each bind ATP. Y129 is modified (phosphotyrosine). Residue D181 is the Proton acceptor of the active site. S185 carries the phosphoserine modification. T223 is modified (phosphothreonine). Residue Y231 is modified to Phosphotyrosine.

It belongs to the protein kinase superfamily. Ser/Thr protein kinase family. CRK subfamily.

The enzyme catalyses L-seryl-[protein] + ATP = O-phospho-L-seryl-[protein] + ADP + H(+). It catalyses the reaction L-threonyl-[protein] + ATP = O-phospho-L-threonyl-[protein] + ADP + H(+). In Arabidopsis thaliana (Mouse-ear cress), this protein is Cysteine-rich receptor-like protein kinase 44.